Consider the following 421-residue polypeptide: Medium-chain specific acyl-CoA dehydrogenase, mitochondrial (421 aa).

A mitochondrion-targeting transit peptide spans 1–25; the sequence is MIALFRRSCGVLRSLSHFDWRSQHT. N6-acetyllysine; alternate is present on lysine 69. At lysine 69 the chain carries N6-succinyllysine; alternate. An N6-acetyllysine modification is found at lysine 79. 158–167 provides a ligand contact to FAD; it reads YCVTEPVAGS. Serine 167 contributes to the octanoyl-CoA binding site. Lysine 179 carries the N6-succinyllysine modification. Position 191–193 (191–193) interacts with FAD; sequence WIT. Lysine 212 is modified (N6-acetyllysine; alternate). Position 212 is an N6-succinyllysine; alternate (lysine 212). Serine 216 contacts octanoyl-CoA. N6-acetyllysine; alternate occurs at positions 217, 259, and 271. Lysine 217, lysine 259, and lysine 271 each carry N6-succinyllysine; alternate. Aspartate 278 is an octanoyl-CoA binding site. Lysine 279 is subject to N6-acetyllysine. Arginine 281 contacts octanoyl-CoA. The residue at position 301 (lysine 301) is an N6-acetyllysine. FAD contacts are provided by residues 306 to 308 and 316 to 317; these read RKT and HQ. Residues arginine 349 and threonine 351 each contribute to the octanoyl-CoA site. A Phosphothreonine modification is found at threonine 351. 374 to 378 contacts FAD; sequence QIFGG. Glutamate 401 is a binding site for octanoyl-CoA. Glutamate 401 functions as the Proton acceptor in the catalytic mechanism. 402–405 serves as a coordination point for FAD; that stretch reads GTAQ.

The protein belongs to the acyl-CoA dehydrogenase family. As to quaternary structure, homotetramer. Interacts with the heterodimeric electron transfer flavoprotein ETF. The cofactor is FAD. Post-translationally, acetylated. Could occur at proximity of the cofactor-binding sites and reduce the catalytic activity. Could be deacetylated by SIRT3.

The protein localises to the mitochondrion matrix. It catalyses the reaction a medium-chain 2,3-saturated fatty acyl-CoA + oxidized [electron-transfer flavoprotein] + H(+) = a medium-chain (2E)-enoyl-CoA + reduced [electron-transfer flavoprotein]. The enzyme catalyses pentanoyl-CoA + oxidized [electron-transfer flavoprotein] + H(+) = (2E)-pentenoyl-CoA + reduced [electron-transfer flavoprotein]. The catalysed reaction is hexanoyl-CoA + oxidized [electron-transfer flavoprotein] + H(+) = (2E)-hexenoyl-CoA + reduced [electron-transfer flavoprotein]. It carries out the reaction octanoyl-CoA + oxidized [electron-transfer flavoprotein] + H(+) = (2E)-octenoyl-CoA + reduced [electron-transfer flavoprotein]. It catalyses the reaction decanoyl-CoA + oxidized [electron-transfer flavoprotein] + H(+) = (2E)-decenoyl-CoA + reduced [electron-transfer flavoprotein]. The enzyme catalyses dodecanoyl-CoA + oxidized [electron-transfer flavoprotein] + H(+) = (2E)-dodecenoyl-CoA + reduced [electron-transfer flavoprotein]. The catalysed reaction is tetradecanoyl-CoA + oxidized [electron-transfer flavoprotein] + H(+) = (2E)-tetradecenoyl-CoA + reduced [electron-transfer flavoprotein]. It carries out the reaction oxidized [electron-transfer flavoprotein] + hexadecanoyl-CoA + H(+) = (2E)-hexadecenoyl-CoA + reduced [electron-transfer flavoprotein]. The protein operates within lipid metabolism; mitochondrial fatty acid beta-oxidation. Medium-chain specific acyl-CoA dehydrogenase is one of the acyl-CoA dehydrogenases that catalyze the first step of mitochondrial fatty acid beta-oxidation, an aerobic process breaking down fatty acids into acetyl-CoA and allowing the production of energy from fats. The first step of fatty acid beta-oxidation consists in the removal of one hydrogen from C-2 and C-3 of the straight-chain fatty acyl-CoA thioester, resulting in the formation of trans-2-enoyl-CoA. Electron transfer flavoprotein (ETF) is the electron acceptor that transfers electrons to the main mitochondrial respiratory chain via ETF-ubiquinone oxidoreductase (ETF dehydrogenase). Among the different mitochondrial acyl-CoA dehydrogenases, medium-chain specific acyl-CoA dehydrogenase acts specifically on acyl-CoAs with saturated 6 to 12 carbons long primary chains. The polypeptide is Medium-chain specific acyl-CoA dehydrogenase, mitochondrial (Bos taurus (Bovine)).